Consider the following 505-residue polypeptide: Aspartyl/glutamyl-tRNA(Asn/Gln) amidotransferase subunit B (505 aa).

The protein belongs to the GatB/GatE family. GatB subfamily. Heterotrimer of A, B and C subunits.

The catalysed reaction is L-glutamyl-tRNA(Gln) + L-glutamine + ATP + H2O = L-glutaminyl-tRNA(Gln) + L-glutamate + ADP + phosphate + H(+). It catalyses the reaction L-aspartyl-tRNA(Asn) + L-glutamine + ATP + H2O = L-asparaginyl-tRNA(Asn) + L-glutamate + ADP + phosphate + 2 H(+). Allows the formation of correctly charged Asn-tRNA(Asn) or Gln-tRNA(Gln) through the transamidation of misacylated Asp-tRNA(Asn) or Glu-tRNA(Gln) in organisms which lack either or both of asparaginyl-tRNA or glutaminyl-tRNA synthetases. The reaction takes place in the presence of glutamine and ATP through an activated phospho-Asp-tRNA(Asn) or phospho-Glu-tRNA(Gln). The chain is Aspartyl/glutamyl-tRNA(Asn/Gln) amidotransferase subunit B from Streptomyces avermitilis (strain ATCC 31267 / DSM 46492 / JCM 5070 / NBRC 14893 / NCIMB 12804 / NRRL 8165 / MA-4680).